A 361-amino-acid chain; its full sequence is Phosphoserine aminotransferase (361 aa).

Arg-43 lines the L-glutamate pocket. Residues 77–78 (AS), Trp-103, Thr-153, Asp-173, and Gln-196 each bind pyridoxal 5'-phosphate. An N6-(pyridoxal phosphate)lysine modification is found at Lys-197. 238-239 (NT) serves as a coordination point for pyridoxal 5'-phosphate.

It belongs to the class-V pyridoxal-phosphate-dependent aminotransferase family. SerC subfamily. In terms of assembly, homodimer. Pyridoxal 5'-phosphate is required as a cofactor.

It localises to the cytoplasm. The enzyme catalyses O-phospho-L-serine + 2-oxoglutarate = 3-phosphooxypyruvate + L-glutamate. It catalyses the reaction 4-(phosphooxy)-L-threonine + 2-oxoglutarate = (R)-3-hydroxy-2-oxo-4-phosphooxybutanoate + L-glutamate. The protein operates within amino-acid biosynthesis; L-serine biosynthesis; L-serine from 3-phospho-D-glycerate: step 2/3. Functionally, catalyzes the reversible conversion of 3-phosphohydroxypyruvate to phosphoserine and of 3-hydroxy-2-oxo-4-phosphonooxybutanoate to phosphohydroxythreonine. The polypeptide is Phosphoserine aminotransferase (Bacillus anthracis (strain A0248)).